Here is a 462-residue protein sequence, read N- to C-terminus: Transcript termination protein A18 (462 aa).

The Helicase ATP-binding domain occupies 99–255 (KCKEKRPLYT…NSIINFIKFS (157 aa)). ATP is bound at residue 112 to 119 (LACGFGKT). Positions 205–208 (DEAH) match the DEAH box motif. In terms of domain architecture, Helicase C-terminal spans 308-459 (IVDKIIETFK…ATKLGFREVS (152 aa)).

It belongs to the helicase family. Poxviruses subfamily. In terms of assembly, interacts with G2. Might be part of a transcription complex composed at least of G2, A18, and H5.

It is found in the virion. Functionally, DNA helicase which seems to act as a postreplicative transcription termination factor. Involved in ATP-dependent release of nascent RNA. Forms a stable complex with single-stranded DNA, and to a lesser extent RNA. The polypeptide is Transcript termination protein A18 (Vertebrata (FPV)).